The sequence spans 292 residues: G1/S-specific cyclin-D3 (292 aa).

Residues 27–152 enclose the Cyclin N-terminal domain; the sequence is VLQSLLRLEE…LVLGKLKWDL (126 aa). The segment at 254–292 is disordered; it reads SLREASQTSSSPAPKAPRGSSSQGPSQTSTPTDVTAIHL. 2 positions are modified to phosphoserine: Ser264 and Ser279. Low complexity predominate over residues 272–285; that stretch reads GSSSQGPSQTSTPT. Thr283 carries the phosphothreonine modification.

Belongs to the cyclin family. Cyclin D subfamily. In terms of assembly, interacts with the CDK4 and CDK6 protein kinases to form a serine/threonine kinase holoenzyme complex. The cyclin subunit imparts substrate specificity to the complex. Interacts with ATF5. Interacts with EIF3K. Component of the ternary complex cyclin D/CDK4/CDKN1B required for nuclear translocation and modulation of CDK4-mediated kinase activity. Can form similar complexes with either CDKN1A or CDKN2A. Post-translationally, phosphorylation at Thr-283 by MAP kinases is required for ubiquitination and degradation by the DCX(AMBRA1) complex. In terms of processing, ubiquitinated by the DCX(AMBRA1) complex during the transition from G1 to S cell phase, leading to its degradation: ubiquitination is dependent on Thr-283 phosphorylation. The DCX(AMBRA1) complex represents the major regulator of CCND3 stability during the G1/S transition. Polyubiquitinated by the SCF(FBXL2) complex, leading to proteasomal degradation.

The protein resides in the nucleus. The protein localises to the cytoplasm. In terms of biological role, regulatory component of the cyclin D3-CDK4 (DC) complex that phosphorylates and inhibits members of the retinoblastoma (RB) protein family including RB1 and regulates the cell-cycle during G(1)/S transition. Phosphorylation of RB1 allows dissociation of the transcription factor E2F from the RB/E2F complex and the subsequent transcription of E2F target genes which are responsible for the progression through the G(1) phase. Hypophosphorylates RB1 in early G(1) phase. Cyclin D-CDK4 complexes are major integrators of various mitogenenic and antimitogenic signals. Component of the ternary complex, cyclin D3/CDK4/CDKN1B, required for nuclear translocation and activity of the cyclin D-CDK4 complex. Shows transcriptional coactivator activity with ATF5 independently of CDK4. The chain is G1/S-specific cyclin-D3 from Homo sapiens (Human).